The chain runs to 665 residues: MNFMKVYEEFLLTLKNMRPDVIIHNPVMFLTEMSLFLSVFIYAFPGFFGVPSSTTYLQFYLAVVILLFLTVFFSSMSTAMSEGKSKAITDSLKKFKTEVTAHVIRDGNPVDVKSTDLRKGDIIVVYRDEIIPIDGEVIEGSGYVDESNVTGESRAVMKVIGDTVTGSTRLVTDKIKIRATADPGSTFIDKMIDLVNRATREKTPNEIALTVFLSGLTLIFLIITASIFSISHYYGRTANVMMLIVLLIALIPTTIGALLPAIGIAAINKVSEYNIIAKSGRAIENAGDIDTIILDKTGTITIGERQAVRMYPNKGVDDKEFYRMCALASFYDQTKEGISILNLARSNGITVSEEDLRGYSFIPFSSETKYSGLESDSDYIIKGSLHALKEKFHVADEFIEALCKEISMRGGTAIPVVHNGKFAGVIELQDLIKPGIKERIAEIKNMDIKTVMCTGDDEVTAQYISAQVGLDEYIANSKPIDKYNVVIREKERQRMVAMVGDGTNDAPALAKADVGLAMNNGTQAAKEAANMIDLDSNPTKLMDVIFLGKQILITRGALTTFSIANDISKYFVIIPAIFYMFPSLSMVNVLDLTDPIVAVTSALIFNTIIIVFLIPLALGGVKYKPTSISDLLKRNIMIYGLGGVVVPFIAIKLIYMLLVALGVVW.

4 helical membrane-spanning segments follow: residues 28–48 (MFLTEMSLFLSVFIYAFPGFF), 56–76 (YLQFYLAVVILLFLTVFFSSM), 207–227 (IALTVFLSGLTLIFLIITASI), and 244–264 (IVLLIALIPTTIGALLPAIGI). Residue Asp295 is the 4-aspartylphosphate intermediate of the active site. Residues Asp332, Glu336, 364-371 (FSSETKYS), and Lys382 each bind ATP. Residues Asp501 and Asp505 each coordinate Mg(2+). A run of 3 helical transmembrane segments spans residues 570-590 (YFVIIPAIFYMFPSLSMVNVL), 596-616 (IVAVTSALIFNTIIIVFLIPL), and 644-664 (VVVPFIAIKLIYMLLVALGVV).

It belongs to the cation transport ATPase (P-type) (TC 3.A.3) family. Type IA subfamily. In terms of assembly, the system is composed of three essential subunits: KdpA, KdpB and KdpC.

The protein resides in the cell membrane. It carries out the reaction K(+)(out) + ATP + H2O = K(+)(in) + ADP + phosphate + H(+). Functionally, part of the high-affinity ATP-driven potassium transport (or Kdp) system, which catalyzes the hydrolysis of ATP coupled with the electrogenic transport of potassium into the cytoplasm. This subunit is responsible for energy coupling to the transport system and for the release of the potassium ions to the cytoplasm. This chain is Potassium-transporting ATPase ATP-binding subunit, found in Thermoplasma acidophilum (strain ATCC 25905 / DSM 1728 / JCM 9062 / NBRC 15155 / AMRC-C165).